The primary structure comprises 171 residues: LIM domain transcription factor LMO4-A (171 aa).

Polar residues predominate over residues 1–19; sequence MVNNRSSESTTTAVSSNGS. Positions 1 to 21 are disordered; sequence MVNNRSSESTTTAVSSNGSPP. 2 consecutive LIM zinc-binding domains span residues 22–84 and 86–148; these read KACA…LFGN and GACN…GLLN.

At the start of gastrulation (stage 10), expressed in the mesodermal marginal zone. Shortly after (stage 11), expression is down-regulated in the dorsal most region. During neurulation, expressed in the neural plate and ventral epidermis. At late neurula stages, also expressed more rostrally, and then in the brain, migrating neural crests and ventral epidermis.

Its function is as follows. Acts as a positive cofactor of GATA transcription factors to establish the identity of the ventral mesoderm during gastrulation. Down-regulation in the dorsal mesoderm is necessary for the proper formation of this territory since, when present, lmo4 may bind ldb1 and restrict the availability of this cofactor for Spemman organizer transcription factors. At neurula stages, suppresses primary neuron differentiation and modulates gene expression at the Isthmic Organizer of the midbrain-hindbrain boundary. The protein is LIM domain transcription factor LMO4-A (lmo4-a) of Xenopus laevis (African clawed frog).